Here is a 452-residue protein sequence, read N- to C-terminus: 23S rRNA (uracil(1939)-C(5))-methyltransferase RlmD (452 aa).

The tract at residues 1 to 25 (MSKKKSNSGLRFQPAGGNRTPQVPV) is disordered. A TRAM domain is found at 22-80 (QVPVGKKQRLDIERLAGDGRGIAFLDGRTWFVSGALAGEAVEARVLNARGKVVEARLER). 4 residues coordinate [4Fe-4S] cluster: C93, C99, C102, and C181. Positions 285, 314, 319, 335, 362, and 383 each coordinate S-adenosyl-L-methionine. The active-site Nucleophile is C409.

It belongs to the class I-like SAM-binding methyltransferase superfamily. RNA M5U methyltransferase family. RlmD subfamily.

The enzyme catalyses uridine(1939) in 23S rRNA + S-adenosyl-L-methionine = 5-methyluridine(1939) in 23S rRNA + S-adenosyl-L-homocysteine + H(+). Catalyzes the formation of 5-methyl-uridine at position 1939 (m5U1939) in 23S rRNA. The polypeptide is 23S rRNA (uracil(1939)-C(5))-methyltransferase RlmD (Pseudomonas putida (strain ATCC 47054 / DSM 6125 / CFBP 8728 / NCIMB 11950 / KT2440)).